Consider the following 418-residue polypeptide: Aminodeoxyfutalosine deaminase (418 aa).

Positions 97 and 99 each coordinate Zn(2+). Substrate contacts are provided by Glu-173 and His-211. His-238 is a binding site for Zn(2+). Glu-241 functions as the Proton donor in the catalytic mechanism. Asp-352 contributes to the Zn(2+) binding site.

The protein belongs to the metallo-dependent hydrolases superfamily. The cofactor is Zn(2+).

The catalysed reaction is 6-amino-6-deoxyfutalosine + H2O + H(+) = futalosine + NH4(+). It functions in the pathway quinol/quinone metabolism; menaquinone biosynthesis. In terms of biological role, catalyzes the deamination of aminodeoxyfutalosine (AFL) into futalosine (FL). To a lesser extent, can also deaminate 5'-deoxyadenosine, 5'-methylthioadenosine, 2'-deoxyadenosine, adenosine, 1-(6-amino-9H-purin-9-yl)-1-deoxy-N-ethyl-beta-D-ribofuranuronamide (NECA), and S-adenosylhomocysteine. The polypeptide is Aminodeoxyfutalosine deaminase (Deinococcus radiodurans (strain ATCC 13939 / DSM 20539 / JCM 16871 / CCUG 27074 / LMG 4051 / NBRC 15346 / NCIMB 9279 / VKM B-1422 / R1)).